A 129-amino-acid chain; its full sequence is Large ribosomal subunit protein bL20 (129 aa).

Positions Met-1–Val-17 are enriched in basic residues. A disordered region spans residues Met-1–Ser-29.

The protein belongs to the bacterial ribosomal protein bL20 family.

In terms of biological role, binds directly to 23S ribosomal RNA and is necessary for the in vitro assembly process of the 50S ribosomal subunit. It is not involved in the protein synthesizing functions of that subunit. The protein is Large ribosomal subunit protein bL20 of Mycobacterium ulcerans (strain Agy99).